The following is a 93-amino-acid chain: Large ribosomal subunit protein uL23cz/uL23cy (93 aa).

This sequence belongs to the universal ribosomal protein uL23 family. In terms of assembly, part of the 50S ribosomal subunit.

It localises to the plastid. The protein resides in the chloroplast. Its function is as follows. Binds to 23S rRNA. This Lactuca sativa (Garden lettuce) protein is Large ribosomal subunit protein uL23cz/uL23cy (rpl23-A).